The sequence spans 648 residues: 1-deoxy-D-xylulose-5-phosphate synthase (648 aa).

Thiamine diphosphate-binding positions include H79 and 120–122; that span reads GHA. D152 provides a ligand contact to Mg(2+). Thiamine diphosphate-binding positions include 153–154, N181, F293, and E377; that span reads GS. A Mg(2+)-binding site is contributed by N181.

This sequence belongs to the transketolase family. DXPS subfamily. In terms of assembly, homodimer. It depends on Mg(2+) as a cofactor. Thiamine diphosphate is required as a cofactor.

It catalyses the reaction D-glyceraldehyde 3-phosphate + pyruvate + H(+) = 1-deoxy-D-xylulose 5-phosphate + CO2. It functions in the pathway metabolic intermediate biosynthesis; 1-deoxy-D-xylulose 5-phosphate biosynthesis; 1-deoxy-D-xylulose 5-phosphate from D-glyceraldehyde 3-phosphate and pyruvate: step 1/1. Functionally, catalyzes the acyloin condensation reaction between C atoms 2 and 3 of pyruvate and glyceraldehyde 3-phosphate to yield 1-deoxy-D-xylulose-5-phosphate (DXP). The polypeptide is 1-deoxy-D-xylulose-5-phosphate synthase (Bacteroides fragilis (strain ATCC 25285 / DSM 2151 / CCUG 4856 / JCM 11019 / LMG 10263 / NCTC 9343 / Onslow / VPI 2553 / EN-2)).